Here is a 58-residue protein sequence, read N- to C-terminus: Small ribosomal subunit protein bS21 (58 aa).

Positions 32 to 42 are enriched in basic and acidic residues; that stretch reads IRKREHYEKPS. The tract at residues 32–58 is disordered; it reads IRKREHYEKPSVRRKKKSEAARKRKFN. The segment covering 43-58 has biased composition (basic residues); that stretch reads VRRKKKSEAARKRKFN.

This sequence belongs to the bacterial ribosomal protein bS21 family.

This Lachnospira eligens (strain ATCC 27750 / DSM 3376 / VPI C15-48 / C15-B4) (Eubacterium eligens) protein is Small ribosomal subunit protein bS21.